We begin with the raw amino-acid sequence, 491 residues long: Serine/threonine-protein kinase 33 (491 aa).

The disordered stretch occupies residues 51 to 89; sequence FASQERKKERNTSRESSLKDLSIRTSNVERKPQAQWSRS. A compositionally biased stretch (basic and acidic residues) spans 54 to 82; it reads QERKKERNTSRESSLKDLSIRTSNVERKP. The Protein kinase domain occupies 111–377; it reads YTFGRILGQG…AKELLDNQWL (267 aa). ATP contacts are provided by residues 117 to 125 and Lys140; that span reads LGQGSFGMV. Catalysis depends on Asp233, which acts as the Proton acceptor. Positions 398–491 are disordered; it reads KNNPESDEET…TTLFRGKKRL (94 aa). Residues 402-414 show a composition bias toward acidic residues; it reads ESDEETNTDEETE. Ser403 is subject to Phosphoserine. Residues 415–431 are compositionally biased toward polar residues; the sequence is QSAVYSPSANTAKQPTN. Over residues 445–457 the composition is skewed to low complexity; it reads SSNSSSSKLLSAE. Positions 475 to 484 are enriched in polar residues; it reads AKTTLKSTTL.

The protein belongs to the protein kinase superfamily. CAMK Ser/Thr protein kinase family. CaMK subfamily. As to quaternary structure, homodimer. In terms of processing, autophosphorylated. In terms of tissue distribution, highly expressed in testis, particularly in cells from the spermatogenic epithelia. Present in meiotic and post meiotic sperm cells. Significant expression is detected in lung epithelia, alveolar macrophages, horizontal cells in the retina and in embryonic organs such as heart, brain and spinal cord. Also expressed in pituitary gland, kidney, pancreas, trachea and thyroid gland.

The protein localises to the cytoplasm. The protein resides in the cytoskeleton. Its subcellular location is the perinuclear region. The enzyme catalyses L-seryl-[protein] + ATP = O-phospho-L-seryl-[protein] + ADP + H(+). The catalysed reaction is L-threonyl-[protein] + ATP = O-phospho-L-threonyl-[protein] + ADP + H(+). With respect to regulation, specifically inhibited by CDD-2807 ((3-([1,1'-Biphenyl]-2-ylethynyl)-1H-indazol-5-yl)(2,6-diazaspiro[3.5]nonan-2-yl)methanone). CDD-2807 is a potential male contraceptive drug: it is not toxic, efficiently crosses the blood-testis barrier and induces a reversible contraceptive effect in male mice. Its function is as follows. Serine/threonine protein kinase required for spermatid differentiation and male fertility. Promotes sperm flagella assembly during spermatogenesis by mediating phosphorylation of fibrous sheath proteins AKAP3 and AKAP4. Also phosphorylates vimentin/VIM, thereby regulating the dynamic behavior of the intermediate filament cytoskeleton. This Mus musculus (Mouse) protein is Serine/threonine-protein kinase 33.